Consider the following 403-residue polypeptide: Ribosomal RNA large subunit methyltransferase I (403 aa).

The PUA domain maps to tyrosine 9–arginine 88.

Belongs to the methyltransferase superfamily. RlmI family.

It localises to the cytoplasm. It catalyses the reaction cytidine(1962) in 23S rRNA + S-adenosyl-L-methionine = 5-methylcytidine(1962) in 23S rRNA + S-adenosyl-L-homocysteine + H(+). Specifically methylates the cytosine at position 1962 (m5C1962) of 23S rRNA. The chain is Ribosomal RNA large subunit methyltransferase I from Salmonella enteritidis PT4 (strain P125109).